Reading from the N-terminus, the 842-residue chain is Translation initiation factor IF-2 (842 aa).

A disordered region spans residues 121 to 144 (TESTSVEKSESDDVTLEEESSKKV). Residues 340–510 (PRAPVVTVMG…LLMAELLELK (171 aa)) form the tr-type G domain. The segment at 349 to 356 (GHVDHGKT) is G1. 349-356 (GHVDHGKT) lines the GTP pocket. A G2 region spans residues 374–378 (GITQH). Residues 396–399 (DTPG) form a G3 region. GTP is bound by residues 396–400 (DTPGH) and 450–453 (NKID). The tract at residues 450-453 (NKID) is G4. The tract at residues 486 to 488 (SAK) is G5.

Belongs to the TRAFAC class translation factor GTPase superfamily. Classic translation factor GTPase family. IF-2 subfamily.

It localises to the cytoplasm. Its function is as follows. One of the essential components for the initiation of protein synthesis. Protects formylmethionyl-tRNA from spontaneous hydrolysis and promotes its binding to the 30S ribosomal subunits. Also involved in the hydrolysis of GTP during the formation of the 70S ribosomal complex. This is Translation initiation factor IF-2 from Ehrlichia chaffeensis (strain ATCC CRL-10679 / Arkansas).